The chain runs to 344 residues: ATPase GET3 (344 aa).

26–33 (KGGVGKTT) is a binding site for ATP. D57 is a catalytic residue. E239 and N266 together coordinate ATP. Zn(2+) is bound by residues C276 and C279.

Belongs to the arsA ATPase family. Homodimer. Component of the Golgi to ER traffic (GET) complex, which is composed of GET1, GET2 and GET3. Within the complex, GET1 and GET2 form a heterotetramer which is stabilized by phosphatidylinositol binding and which binds to the GET3 homodimer. Interacts with the chloride channel protein GEF1.

Its subcellular location is the cytoplasm. It is found in the endoplasmic reticulum. The protein resides in the golgi apparatus. Functionally, ATPase required for the post-translational delivery of tail-anchored (TA) proteins to the endoplasmic reticulum. Recognizes and selectively binds the transmembrane domain of TA proteins in the cytosol. This complex then targets to the endoplasmic reticulum by membrane-bound receptors GET1 and GET2, where the tail-anchored protein is released for insertion. This process is regulated by ATP binding and hydrolysis. ATP binding drives the homodimer towards the closed dimer state, facilitating recognition of newly synthesized TA membrane proteins. ATP hydrolysis is required for insertion. Subsequently, the homodimer reverts towards the open dimer state, lowering its affinity for the GET1-GET2 receptor, and returning it to the cytosol to initiate a new round of targeting. Cooperates with the HDEL receptor ERD2 to mediate the ATP-dependent retrieval of resident ER proteins that contain a C-terminal H-D-E-L retention signal from the Golgi to the ER. Involved in low-level resistance to the oxyanions arsenite and arsenate, and in heat tolerance. The polypeptide is ATPase GET3 (Komagataella phaffii (strain GS115 / ATCC 20864) (Yeast)).